Consider the following 291-residue polypeptide: Ribosomal protein L11 methyltransferase (291 aa).

Positions 136, 159, 181, and 228 each coordinate S-adenosyl-L-methionine.

Belongs to the methyltransferase superfamily. PrmA family.

The protein localises to the cytoplasm. It catalyses the reaction L-lysyl-[protein] + 3 S-adenosyl-L-methionine = N(6),N(6),N(6)-trimethyl-L-lysyl-[protein] + 3 S-adenosyl-L-homocysteine + 3 H(+). In terms of biological role, methylates ribosomal protein L11. In Sinorhizobium fredii (strain NBRC 101917 / NGR234), this protein is Ribosomal protein L11 methyltransferase.